The sequence spans 165 residues: Regulator of sigma D (165 aa).

It belongs to the Rsd/AlgQ family. Interacts with RpoD.

Its subcellular location is the cytoplasm. In terms of biological role, binds RpoD and negatively regulates RpoD-mediated transcription activation by preventing the interaction between the primary sigma factor RpoD with the catalytic core of the RNA polymerase and with promoter DNA. May be involved in replacement of the RNA polymerase sigma subunit from RpoD to RpoS during the transition from exponential growth to the stationary phase. The chain is Regulator of sigma D from Enterobacter sp. (strain 638).